We begin with the raw amino-acid sequence, 207 residues long: GTP cyclohydrolase 1 (207 aa).

3 residues coordinate Zn(2+): cysteine 94, histidine 97, and cysteine 167.

It belongs to the GTP cyclohydrolase I family. As to quaternary structure, toroid-shaped homodecamer, composed of two pentamers of five dimers.

The catalysed reaction is GTP + H2O = 7,8-dihydroneopterin 3'-triphosphate + formate + H(+). It participates in cofactor biosynthesis; 7,8-dihydroneopterin triphosphate biosynthesis; 7,8-dihydroneopterin triphosphate from GTP: step 1/1. The sequence is that of GTP cyclohydrolase 1 from Thermobifida fusca (strain YX).